The primary structure comprises 124 residues: Multifunctional methyltransferase subunit TRM112 homolog A (124 aa).

One can recognise a TRM112 domain in the interval 2–120 (RLITHNMLSC…NKGIPNMLLH (119 aa)).

This sequence belongs to the TRM112 family. As to quaternary structure, interacts with TRM9.

Functionally, acts as an activator of both rRNA/tRNA and protein methyltransferases. Required for TRM9 tRNA methyltransferase activity. Involved in the regulation of cell division progression during organ growth. Required for the expression of cell cycle-related genes, and the G2-M phase progression during organogenesis. The chain is Multifunctional methyltransferase subunit TRM112 homolog A from Arabidopsis thaliana (Mouse-ear cress).